A 518-amino-acid chain; its full sequence is Cytochrome P450 monooxygenase ARMGADRAFT_1018417 (518 aa).

The helical transmembrane segment at 3–23 (LFSAYALAFSLLMIPLILYIL) threads the bilayer. Residue Cys433 coordinates heme. N-linked (GlcNAc...) asparagine glycosylation occurs at Asn455.

Belongs to the cytochrome P450 family. The cofactor is heme.

Its subcellular location is the membrane. The protein operates within secondary metabolite biosynthesis. Functionally, cytochrome P450 monooxygenase, part of the gene cluster that mediates the biosynthesis of melleolides, a range of antifungal and phytotoxic polyketide derivatives composed of an orsellinic acid (OA) moiety esterified to various sesquiterpene alcohols. The first step in melleolides biosynthesis is performed by the delta(6)-protoilludene synthase PRO1 which catalyzes the cyclization of farnesyl diphosphate to protoilludene. The orsellinic acid synthase armB produces OA by condensing acetyl-CoA with 3 malonyl-CoA units in a three-round chain elongation reaction folowed by a C2-C7 ring closure. ArmB further catalyzes the trans-esterification of OA to the various sesquiterpene alcohols resulting from the hydroxylation of protoilludene. The melleolides cluster also includes 5 cytochrome P450 monooxygenases, 4 NAD(+)-dependent oxidoreductases, one flavin-dependent oxidoreductase, and one O-methyltransferase. The cytochrome P450 monooxygenases may be involved in protoilludene hydroxylation to elaborate melleolides with multiple alcohol groups, such as melleolide D, which carries alcohol functionalities at C-4, C-5, C-10, and C-13. The role of the NAD(+)-dependent enzymes remains unknown. Numerous melleolides, including arnamial, show 5'-O-methylation of the aromatic moiety which may be catalyzed by the methyltransferase encoded in the cluster. The flavin-dependent oxidoreductase might represent the dehydrogenase yielding the aldehyde in position 1 of arnamial and other melleolides. Finally, several halogenase localized outside of the cluster, are able to catalyze the transfer of a single chlorine atom to the melleolide backbone, resulting in a 6'-chloromelleolide product. This chain is Cytochrome P450 monooxygenase ARMGADRAFT_1018417, found in Armillaria gallica (Bulbous honey fungus).